The primary structure comprises 863 residues: Leucine--tRNA ligase (863 aa).

Residues 42–52 carry the 'HIGH' region motif; it reads PYPSGRLHMGH. Positions 622–626 match the 'KMSKS' region motif; sequence KMSKS. Lys625 lines the ATP pocket.

The protein belongs to the class-I aminoacyl-tRNA synthetase family.

It localises to the cytoplasm. It carries out the reaction tRNA(Leu) + L-leucine + ATP = L-leucyl-tRNA(Leu) + AMP + diphosphate. This Shewanella denitrificans (strain OS217 / ATCC BAA-1090 / DSM 15013) protein is Leucine--tRNA ligase.